A 360-amino-acid polypeptide reads, in one-letter code: MDVGSPEAFSESGTLGVEEEFFVVDEHGVPTAGSDELVYEGEPPEPIAGRLDHELFKFVVETQTPTLNGVAEAPAAIREVRAALVAYASEHGLRIAGAGLHPGARWREHEHAEKPRYRSQLDRIQYPQHRNTTAGLHIHVGVDDPDKAVWVSNRMRWHMPVLLALSANSPYWNGFDTGLASARAKIFEGLPNTGLPTAFESYAAFQAFERRMVEHGGIEDRGELWYDVRPHSGHGTVEVRAPDAQADPAVVDAFVEYAHALVTEYAQRYDDHPDPFSVTGLRRELLDANKWRAMRDGHDASFVARETQGAVDLGTVVDRECDRLGVSGIRDVYDDVSGAQQQRRILDTHGEKRLYNHLSL.

It belongs to the glutamate--cysteine ligase type 2 family. YbdK subfamily.

The enzyme catalyses L-cysteine + L-glutamate + ATP = gamma-L-glutamyl-L-cysteine + ADP + phosphate + H(+). Functionally, catalyzes the synthesis of gamma-glutamylcysteine (gamma-GC), the main low-molecular-weight thiol compound instead of glutathione in halophilic archaea. This Halobacterium salinarum (strain ATCC 29341 / DSM 671 / R1) protein is Glutamate--cysteine ligase.